The chain runs to 407 residues: Zinc finger protein 260 (407 aa).

Disordered stretches follow at residues 1–21, 39–72, and 96–124; these read MLES…PGES, VEHK…HLRS, and SHQK…RNQR. The C2H2-type 1 zinc finger occupies 23 to 45; that stretch reads YECNECKETFSLEQNFVEHKKTH. Composition is skewed to basic and acidic residues over residues 39-51 and 100-111; these read VEHK…EKSP and QHTEERPSESKK. The segment at 51–73 adopts a C2H2-type 2; degenerate zinc-finger fold; the sequence is PECTGCGEESSQASSLTLHLRSR. The C2H2-type 3 zinc-finger motif lies at 79–101; sequence YKCGECGKAFSQRGNFLSHQKQH. Over residues 115 to 124 the composition is skewed to polar residues; sequence PMTTTVRNQR. C2H2-type zinc fingers lie at residues 131–153, 159–181, 187–209, 215–237, 243–265, 271–293, 299–321, 327–349, 355–377, and 383–405; these read YACK…EKIH, FECS…QNIH, FKCN…QRIH, YECK…QRSH, YTCK…EKIH, YKCN…HNIH, YECN…VRIH, YECK…MRSH, YGCN…MRIH, and YQCS…QRIH.

Belongs to the krueppel C2H2-type zinc-finger protein family. As to quaternary structure, binds DNA. Interacts with GATA4. In terms of tissue distribution, predominantly present in heart. Outside the heart, it is detected in embryonic and postnatal vascular smooth muscle cells and in epithelial cells of the lung, gut and kidney at sites of epithelial morphogenesis and in the spinal cord (at protein level).

It is found in the nucleus. In terms of biological role, transcription factor that acts as a cardiac regulator and an effector of alpha1-adrenergic signaling. Binds to PE response elements (PERE) present in the promoter of genes such as ANF/NPPA and acts as a direct transcriptional activator of NPPA. Also acts as a cofactor with GATA4, a key cardiac regulator. This chain is Zinc finger protein 260 (Znf260), found in Mus musculus (Mouse).